The sequence spans 135 residues: Ribonuclease P protein component (135 aa).

A disordered region spans residues 115–135; sequence ETEPVSPVSPTSLPQNERGSP. The segment covering 122-135 has biased composition (polar residues); that stretch reads VSPTSLPQNERGSP.

This sequence belongs to the RnpA family. As to quaternary structure, consists of a catalytic RNA component (M1 or rnpB) and a protein subunit.

It catalyses the reaction Endonucleolytic cleavage of RNA, removing 5'-extranucleotides from tRNA precursor.. Functionally, RNaseP catalyzes the removal of the 5'-leader sequence from pre-tRNA to produce the mature 5'-terminus. It can also cleave other RNA substrates such as 4.5S RNA. The protein component plays an auxiliary but essential role in vivo by binding to the 5'-leader sequence and broadening the substrate specificity of the ribozyme. The sequence is that of Ribonuclease P protein component from Chloroflexus aggregans (strain MD-66 / DSM 9485).